The following is a 224-amino-acid chain: ATP-dependent dethiobiotin synthetase BioD (224 aa).

Residue glycine 14 to valine 19 coordinates ATP. Residue threonine 18 participates in Mg(2+) binding. Residue lysine 39 is part of the active site. Serine 43 contributes to the substrate binding site. ATP-binding positions include aspartate 56, glutamate 117 to glycine 120, and asparagine 177 to glutamate 178. Residues aspartate 56 and glutamate 117 each coordinate Mg(2+).

This sequence belongs to the dethiobiotin synthetase family. In terms of assembly, homodimer. Mg(2+) is required as a cofactor.

The protein resides in the cytoplasm. It catalyses the reaction (7R,8S)-7,8-diammoniononanoate + CO2 + ATP = (4R,5S)-dethiobiotin + ADP + phosphate + 3 H(+). The protein operates within cofactor biosynthesis; biotin biosynthesis; biotin from 7,8-diaminononanoate: step 1/2. Its function is as follows. Catalyzes a mechanistically unusual reaction, the ATP-dependent insertion of CO2 between the N7 and N8 nitrogen atoms of 7,8-diaminopelargonic acid (DAPA, also called 7,8-diammoniononanoate) to form a ureido ring. This is ATP-dependent dethiobiotin synthetase BioD from Xanthomonas campestris pv. campestris (strain B100).